A 325-amino-acid chain; its full sequence is uncharacterized protein (325 aa).

The transit peptide at 1–69 (MAMMTTTTTT…KNRRVSVTVS (69 aa)) directs the protein to the chloroplast. Residue Ala70 is modified to N-acetylalanine.

Belongs to the NAD(P)-dependent epimerase/dehydratase family.

The protein resides in the plastid. It is found in the chloroplast. This is an uncharacterized protein from Arabidopsis thaliana (Mouse-ear cress).